A 246-amino-acid polypeptide reads, in one-letter code: uncharacterized protein (246 aa).

Disordered stretches follow at residues 29–54 (SLET…ENGS), 93–114 (LRRT…EDKF), and 148–246 (PIPP…SVVI). Over residues 35–49 (PTSSSPSLSSNSDVS) the composition is skewed to low complexity. The segment covering 172-183 (RQQTNNIRTLHV) has biased composition (polar residues). Low complexity-rich tracts occupy residues 190 to 203 (SSSS…PSSS) and 214 to 225 (SKTTKNRSSNSS). The N-linked (GlcNAc...) asparagine glycan is linked to N219. Residues 235–246 (LTPSPTFESVVI) show a composition bias toward polar residues.

This is an uncharacterized protein from Caenorhabditis elegans.